The chain runs to 147 residues: Thyrotropin subunit beta (147 aa).

The N-terminal stretch at 1 to 20 is a signal peptide; sequence MRVVLLASGVLCLLAGQVLS. Cystine bridges form between Cys22-Cys72, Cys36-Cys87, Cys39-Cys126, Cys47-Cys103, Cys51-Cys105, and Cys108-Cys115. Asn43 carries N-linked (GlcNAc...) asparagine glycosylation.

It belongs to the glycoprotein hormones subunit beta family. Heterodimer of a common alpha chain and a unique beta chain which confers biological specificity to thyrotropin, lutropin, follitropin and gonadotropin.

The protein localises to the secreted. In terms of biological role, indispensable for the control of thyroid structure and metabolism. May play some role in the biological processes of the immature fishes. The sequence is that of Thyrotropin subunit beta (tshb) from Anguilla japonica (Japanese eel).